The primary structure comprises 296 residues: Phosphatidylglycerol--prolipoprotein diacylglyceryl transferase (296 aa).

A run of 4 helical transmembrane segments spans residues 10-30 (IAFS…LAAF), 57-77 (LLFY…MLFY), 92-112 (VWEG…ACGL), and 119-139 (LHFF…LGFG). Position 140 (arginine 140) interacts with a 1,2-diacyl-sn-glycero-3-phospho-(1'-sn-glycerol). 3 helical membrane passes run 194–214 (QLYE…TFSM), 220–240 (YAVS…VEFV), and 255–275 (LTMG…LLAL).

Belongs to the Lgt family.

It is found in the cell inner membrane. It carries out the reaction L-cysteinyl-[prolipoprotein] + a 1,2-diacyl-sn-glycero-3-phospho-(1'-sn-glycerol) = an S-1,2-diacyl-sn-glyceryl-L-cysteinyl-[prolipoprotein] + sn-glycerol 1-phosphate + H(+). It functions in the pathway protein modification; lipoprotein biosynthesis (diacylglyceryl transfer). In terms of biological role, catalyzes the transfer of the diacylglyceryl group from phosphatidylglycerol to the sulfhydryl group of the N-terminal cysteine of a prolipoprotein, the first step in the formation of mature lipoproteins. This Xanthomonas campestris pv. campestris (strain 8004) protein is Phosphatidylglycerol--prolipoprotein diacylglyceryl transferase.